We begin with the raw amino-acid sequence, 293 residues long: Glycine--tRNA ligase alpha subunit (293 aa).

Belongs to the class-II aminoacyl-tRNA synthetase family. Tetramer of two alpha and two beta subunits.

Its subcellular location is the cytoplasm. The catalysed reaction is tRNA(Gly) + glycine + ATP = glycyl-tRNA(Gly) + AMP + diphosphate. In Acaryochloris marina (strain MBIC 11017), this protein is Glycine--tRNA ligase alpha subunit.